We begin with the raw amino-acid sequence, 354 residues long: 5,10-methenyltetrahydromethanopterin hydrogenase (354 aa).

This sequence belongs to the HMD family.

The catalysed reaction is 5,10-methenyl-5,6,7,8-tetrahydromethanopterin + H2 = 5,10-methylenetetrahydromethanopterin + H(+). Its pathway is one-carbon metabolism; methanogenesis from CO(2); 5,10-methylene-5,6,7,8-tetrahydromethanopterin from 5,10-methenyl-5,6,7,8-tetrahydromethanopterin (hydrogen route): step 1/1. Catalyzes the reversible reduction of methenyl-H(4)MPT(+) to methylene-H(4)MPT. The protein is 5,10-methenyltetrahydromethanopterin hydrogenase of Methanococcus maripaludis (strain C5 / ATCC BAA-1333).